A 362-amino-acid chain; its full sequence is uncharacterized protein (362 aa).

A run of 7 helical transmembrane segments spans residues 32 to 52 (GAGWACGVTVVLTPPGTVGAV), 75 to 95 (FVDAVLLAGGSAYGLAAADGV), 106 to 126 (VVMLGGVVPIVPGAVIFDLSV), 148 to 168 (AAVGGQDATVAVGTVGAGVGA), 176 to 196 (GVGTASITLESGPTVGAVVVV), 287 to 307 (VFALATGAVEATATADVPVAM), and 329 to 349 (VLVAVLAAESVAGIPTYCGMF).

Belongs to the peptidase S58 family.

It localises to the cell membrane. Functionally, aminopeptidase. This is an uncharacterized protein from Mycobacterium leprae (strain TN).